The following is a 582-amino-acid chain: Urocanate reductase (582 aa).

A signal peptide spans 1–20; that stretch reads MHYKKSIIGIAVTATAIIAG. A lipid anchor (N-palmitoyl cysteine) is attached at Cys-21. Residue Cys-21 is the site of S-diacylglycerol cysteine attachment. Thr-93 is subject to FMN phosphoryl threonine. Ala-143, Glu-162, Asn-170, Ser-171, Gly-175, Ala-176, Ala-285, and Asp-352 together coordinate FAD. Arg-411 acts as the Proton donor in catalysis. Residues His-521, Glu-550, and Ala-565 each contribute to the FAD site.

This sequence belongs to the FAD-dependent oxidoreductase 2 family. FRD/SDH subfamily. Requires FAD as cofactor. The cofactor is FMN.

The protein resides in the cell membrane. The enzyme catalyses dihydrourocanate + A = urocanate + AH2. Its function is as follows. Catalyzes the two-electron reduction of urocanate to dihydrourocanate (also named imidazole propionate or deamino-histidine). The physiological electron donor is unknown; it might be the membrane-bound tetraheme cytochrome c (CymA). Enables anaerobic growth with urocanate as a sole terminal electron acceptor, and thus can provide the cells with a niche where no other bacteria can compete and survive. Is unable to reduce cinnamate and other unsaturated organic acids such as acrylic, crotonic, fumaric and orotic acids. Has no fumarate reductase or succinate dehydrogenase activity. In Shewanella oneidensis (strain ATCC 700550 / JCM 31522 / CIP 106686 / LMG 19005 / NCIMB 14063 / MR-1), this protein is Urocanate reductase (urdA).